A 350-amino-acid chain; its full sequence is tRNA uridine(34) hydroxylase (350 aa).

Residues 146-240 form the Rhodanese domain; it reads DDPDALFIDM…YARKAREQGL (95 aa). The Cysteine persulfide intermediate role is filled by C200.

The protein belongs to the TrhO family.

The enzyme catalyses uridine(34) in tRNA + AH2 + O2 = 5-hydroxyuridine(34) in tRNA + A + H2O. Catalyzes oxygen-dependent 5-hydroxyuridine (ho5U) modification at position 34 in tRNAs, the first step in 5-carboxymethoxyuridine (cmo5U) biosynthesis. May be part of an alternate pathway, which is able to bypass cmo5U biogenesis in a subset of tRNAs under aerobic conditions. This is tRNA uridine(34) hydroxylase from Escherichia coli O17:K52:H18 (strain UMN026 / ExPEC).